Reading from the N-terminus, the 284-residue chain is MEMO1 family protein STK_20620 (284 aa).

It belongs to the MEMO1 family.

The chain is MEMO1 family protein STK_20620 from Sulfurisphaera tokodaii (strain DSM 16993 / JCM 10545 / NBRC 100140 / 7) (Sulfolobus tokodaii).